We begin with the raw amino-acid sequence, 156 residues long: Small ribosomal subunit protein uS7 (156 aa).

It belongs to the universal ribosomal protein uS7 family. In terms of assembly, part of the 30S ribosomal subunit. Contacts proteins S9 and S11.

Its function is as follows. One of the primary rRNA binding proteins, it binds directly to 16S rRNA where it nucleates assembly of the head domain of the 30S subunit. Is located at the subunit interface close to the decoding center, probably blocks exit of the E-site tRNA. The polypeptide is Small ribosomal subunit protein uS7 (Desulforudis audaxviator (strain MP104C)).